The sequence spans 180 residues: Riboflavin kinase (180 aa).

Positions 40 and 42 each coordinate Mg(2+). Glu-117 serves as the catalytic Nucleophile.

This sequence belongs to the flavokinase family. Requires Zn(2+) as cofactor. The cofactor is Mg(2+).

It catalyses the reaction riboflavin + ATP = FMN + ADP + H(+). The protein operates within cofactor biosynthesis; FMN biosynthesis; FMN from riboflavin (ATP route): step 1/1. Its function is as follows. Catalyzes the phosphorylation of riboflavin (vitamin B2) to form flavin mononucleotide (FMN) coenzyme. The protein is Riboflavin kinase (FMN1) of Meyerozyma guilliermondii (strain ATCC 6260 / CBS 566 / DSM 6381 / JCM 1539 / NBRC 10279 / NRRL Y-324) (Yeast).